Consider the following 448-residue polypeptide: Protein Z-dependent protease inhibitor (448 aa).

Positions 1 to 21 (MRVASSLFLPVLLTEVWLVTS) are cleaved as a signal peptide. A disordered region spans residues 33-70 (VHLESQDYENQTWEEYTRTDPREEEEEEEEKEEGKDEE). The span at 54 to 63 (REEEEEEEEK) shows a compositional bias: acidic residues. N-linked (GlcNAc...) asparagine glycosylation is present at Asn81. Residues 140-157 (AGPLILPALFKKVKETFS) are heparin-binding. 3 N-linked (GlcNAc...) asparagine glycosylation sites follow: Asn184, Asn278, and Asn299.

It belongs to the serpin family. Phosphorylated by FAM20C in the extracellular medium. Detectable in liver, but not in heart, brain, spleen, lung, kidney, skeletal muscle or testes.

It is found in the secreted. In terms of biological role, inhibits activity of the coagulation protease factor Xa in the presence of PROZ, calcium and phospholipids. Also inhibits factor XIa in the absence of cofactors. This is Protein Z-dependent protease inhibitor (Serpina10) from Mus musculus (Mouse).